Consider the following 557-residue polypeptide: D-arabinono-1,4-lactone oxidase (557 aa).

Positions 26–209 constitute an FAD-binding PCMH-type domain; sequence FFCKPQAIFQ…THVTLRTIPK (184 aa). Pros-8alpha-FAD histidine is present on histidine 63.

The protein belongs to the oxygen-dependent FAD-linked oxidoreductase family. It depends on FAD as a cofactor.

It localises to the mitochondrion membrane. The catalysed reaction is D-arabinono-1,4-lactone + O2 = dehydro-D-arabinono-1,4-lactone + H2O2 + H(+). It participates in cofactor biosynthesis; D-erythroascorbate biosynthesis; dehydro-D-arabinono-1,4-lactone from D-arabinose: step 2/2. This chain is D-arabinono-1,4-lactone oxidase (ALO1), found in Debaryomyces hansenii (strain ATCC 36239 / CBS 767 / BCRC 21394 / JCM 1990 / NBRC 0083 / IGC 2968) (Yeast).